Consider the following 132-residue polypeptide: Small ribosomal subunit protein eS12 (132 aa).

Belongs to the eukaryotic ribosomal protein eS12 family.

It is found in the cytoplasm. The chain is Small ribosomal subunit protein eS12 (rps12) from Xenopus laevis (African clawed frog).